Consider the following 143-residue polypeptide: Large ribosomal subunit protein uL15 (143 aa).

The segment at 1-52 (MKLNTLAPAAGSKSAPKRLGRGIGSGLGKTSGKGHKGQKARSGGYHKVGFEG) is disordered. Over residues 21–31 (RGIGSGLGKTS) the composition is skewed to gly residues.

It belongs to the universal ribosomal protein uL15 family. In terms of assembly, part of the 50S ribosomal subunit.

Its function is as follows. Binds to the 23S rRNA. The protein is Large ribosomal subunit protein uL15 of Francisella tularensis subsp. mediasiatica (strain FSC147).